The sequence spans 671 residues: DNA ligase (671 aa).

NAD(+)-binding positions include 31–35 (DAEYD), 80–81 (SL), and E110. The N6-AMP-lysine intermediate role is filled by K112. Residues R133, E167, K283, and K307 each coordinate NAD(+). Residues C401, C404, C419, and C424 each coordinate Zn(2+). Residues 587-671 (EEELVFAGKT…YLPDEGGLNE (85 aa)) form the BRCT domain.

Belongs to the NAD-dependent DNA ligase family. LigA subfamily. Mg(2+) is required as a cofactor. The cofactor is Mn(2+).

The enzyme catalyses NAD(+) + (deoxyribonucleotide)n-3'-hydroxyl + 5'-phospho-(deoxyribonucleotide)m = (deoxyribonucleotide)n+m + AMP + beta-nicotinamide D-nucleotide.. Functionally, DNA ligase that catalyzes the formation of phosphodiester linkages between 5'-phosphoryl and 3'-hydroxyl groups in double-stranded DNA using NAD as a coenzyme and as the energy source for the reaction. It is essential for DNA replication and repair of damaged DNA. This is DNA ligase from Listeria monocytogenes serotype 4a (strain HCC23).